The sequence spans 122 residues: UPF0102 protein DIP1513 (122 aa).

This sequence belongs to the UPF0102 family.

The polypeptide is UPF0102 protein DIP1513 (Corynebacterium diphtheriae (strain ATCC 700971 / NCTC 13129 / Biotype gravis)).